The sequence spans 497 residues: MNKICLKYLLLPWIKNIPKKYISNLKMDSRTLTPGDLFIAVPGIKKDGRHFIVQAINKKAAAILCETKKKDKHGIFKYIKNVILIYFFKLSENVSLLANRFYKEPGKRLKIIGITGTNGKTTVTQLINQWSTILGTKTATMGTLGNGFYNSLQPTNNTTSSPIFIQLFLSKVLEKQAELVTMEVSSHGLIQHRVKEVPFYIAIFTNLTQDHLDYHENLEKYESAKWLLFSTHKVKKIILNADDQYGKIWLKKLLNFYTVAVTIQNRKQKKYSTKWINATNIEQNNNSIYITFESSWGTGRISSCLIGRFNVTNLLLSLACLLELGYSLSDLIHTSEKIIPVQGRMELFSYVKKPTFIIDYAHTPDALKKTLNAIHSHYQRYIWCIFGCGGERDQKKRPIMGAIAEKMSDKVIITNDNPRNEKEKKIIQDILNGCKNKEKILIIPDRKKAISYAYFGAKYHHIILIAGKGHEEKQIIQNRSINYSDKKIVLNLLGKNI.

Ser29 contacts UDP-N-acetyl-alpha-D-muramoyl-L-alanyl-D-glutamate. An ATP-binding site is contributed by 116-122 (GTNGKTT). Residues Asn157, 158-159 (TT), Ser185, Gln191, and Arg193 contribute to the UDP-N-acetyl-alpha-D-muramoyl-L-alanyl-D-glutamate site. N6-carboxylysine is present on Lys225. Residues Arg392, 416–419 (DNPR), Gly467, and Glu471 contribute to the meso-2,6-diaminopimelate site. The short motif at 416–419 (DNPR) is the Meso-diaminopimelate recognition motif element.

Belongs to the MurCDEF family. MurE subfamily. Requires Mg(2+) as cofactor. Carboxylation is probably crucial for Mg(2+) binding and, consequently, for the gamma-phosphate positioning of ATP.

It localises to the cytoplasm. The catalysed reaction is UDP-N-acetyl-alpha-D-muramoyl-L-alanyl-D-glutamate + meso-2,6-diaminopimelate + ATP = UDP-N-acetyl-alpha-D-muramoyl-L-alanyl-gamma-D-glutamyl-meso-2,6-diaminopimelate + ADP + phosphate + H(+). It participates in cell wall biogenesis; peptidoglycan biosynthesis. Its function is as follows. Catalyzes the addition of meso-diaminopimelic acid to the nucleotide precursor UDP-N-acetylmuramoyl-L-alanyl-D-glutamate (UMAG) in the biosynthesis of bacterial cell-wall peptidoglycan. The protein is UDP-N-acetylmuramoyl-L-alanyl-D-glutamate--2,6-diaminopimelate ligase of Buchnera aphidicola subsp. Acyrthosiphon pisum (strain APS) (Acyrthosiphon pisum symbiotic bacterium).